Consider the following 515-residue polypeptide: Bifunctional purine biosynthesis protein PurH (515 aa).

One can recognise an MGS-like domain in the interval 1–145 (MTKRALISVS…KNHASVTVVV (145 aa)).

It belongs to the PurH family.

The enzyme catalyses (6R)-10-formyltetrahydrofolate + 5-amino-1-(5-phospho-beta-D-ribosyl)imidazole-4-carboxamide = 5-formamido-1-(5-phospho-D-ribosyl)imidazole-4-carboxamide + (6S)-5,6,7,8-tetrahydrofolate. It catalyses the reaction IMP + H2O = 5-formamido-1-(5-phospho-D-ribosyl)imidazole-4-carboxamide. The protein operates within purine metabolism; IMP biosynthesis via de novo pathway; 5-formamido-1-(5-phospho-D-ribosyl)imidazole-4-carboxamide from 5-amino-1-(5-phospho-D-ribosyl)imidazole-4-carboxamide (10-formyl THF route): step 1/1. It functions in the pathway purine metabolism; IMP biosynthesis via de novo pathway; IMP from 5-formamido-1-(5-phospho-D-ribosyl)imidazole-4-carboxamide: step 1/1. This Streptococcus uberis (strain ATCC BAA-854 / 0140J) protein is Bifunctional purine biosynthesis protein PurH.